Consider the following 414-residue polypeptide: Putative F-box/kelch-repeat protein At1g20940 (414 aa).

The region spanning 13–65 (SSIINDLPLDLLDEILFRLEPKSMAMMRCTNNSIKSYLSDPRFGPEYPSWVRP) is the F-box domain. 2 Kelch repeats span residues 281 to 328 (LTLI…MYDG) and 331 to 378 (LVVR…KLTP).

Interacts with DEK3.

It functions in the pathway protein modification; protein ubiquitination. In terms of biological role, probable component of an E3 ubiquitin ligase complex. The sequence is that of Putative F-box/kelch-repeat protein At1g20940 from Arabidopsis thaliana (Mouse-ear cress).